A 236-amino-acid chain; its full sequence is UPF0502 protein Bamb_4889 (236 aa).

The protein belongs to the UPF0502 family.

The polypeptide is UPF0502 protein Bamb_4889 (Burkholderia ambifaria (strain ATCC BAA-244 / DSM 16087 / CCUG 44356 / LMG 19182 / AMMD) (Burkholderia cepacia (strain AMMD))).